The sequence spans 192 residues: Lipid A acyltransferase PagP (192 aa).

The first 24 residues, 1 to 24 (MWLRFCAPALMAWYWVFFPSTSQA), serve as a signal peptide directing secretion. Catalysis depends on residues His-63, Asp-106, and Ser-107.

Belongs to the lipid A palmitoyltransferase family. In terms of assembly, homodimer.

Its subcellular location is the cell outer membrane. It catalyses the reaction a lipid A + a 1,2-diacyl-sn-glycero-3-phosphocholine = a hepta-acyl lipid A + a 2-acyl-sn-glycero-3-phosphocholine. It carries out the reaction a lipid IVA + a 1,2-diacyl-sn-glycero-3-phosphocholine = a lipid IVB + a 2-acyl-sn-glycero-3-phosphocholine. The enzyme catalyses a lipid IIA + a 1,2-diacyl-sn-glycero-3-phosphocholine = a lipid IIB + a 2-acyl-sn-glycero-3-phosphocholine. Its function is as follows. Transfers a fatty acid residue from the sn-1 position of a phospholipid to the N-linked hydroxyfatty acid chain on the proximal unit of lipid A or its precursors. The polypeptide is Lipid A acyltransferase PagP (Musicola paradisiaca (strain Ech703) (Dickeya paradisiaca)).